We begin with the raw amino-acid sequence, 217 residues long: Neuron-specific vesicular protein calcyon (217 aa).

Positions 1 to 25 (MVKLGCSFSGKPGKDPGDQDGAAMD) are disordered. Residues 1–87 (MVKLGCSFSG…EEGRRLPTAR (87 aa)) are Extracellular-facing. Asparagine 73 carries an N-linked (GlcNAc...) asparagine glycan. Residues 88–108 (MIAFAMALLGCVLIMYKAIWY) traverse the membrane as a helical segment. At 109–217 (DQFTCPDGFL…AGSAAPPPAQ (109 aa)) the chain is on the cytoplasmic side. Residues 162–217 (PAAWGDGYRAAKEERKGPTQAGAAAAATEPPGKPSAKAEKEAARKAAGSAAPPPAQ) are disordered.

It belongs to the NSG family. Interacts with CLTA. Post-translationally, glycosylated. As to expression, expressed in the pyramidal cells of the prefrontal cortex, in hypothalamus and in caudate nucleus. No expression in spleen. Up-regulated in the prefrontal cortex of schizophrenic patients with nearly twice the levels of non-schizophrenics.

The protein resides in the cytoplasmic vesicle membrane. It localises to the cell membrane. In terms of biological role, interacts with clathrin light chain A and stimulates clathrin self-assembly and clathrin-mediated endocytosis. This is Neuron-specific vesicular protein calcyon (CALY) from Homo sapiens (Human).